Consider the following 424-residue polypeptide: Arginine biosynthesis bifunctional protein ArgJ (424 aa).

Residues T166, K192, T203, E290, N419, and T424 each contribute to the substrate site. T203 acts as the Nucleophile in catalysis.

Belongs to the ArgJ family. In terms of assembly, heterotetramer of two alpha and two beta chains.

The protein localises to the cytoplasm. It catalyses the reaction N(2)-acetyl-L-ornithine + L-glutamate = N-acetyl-L-glutamate + L-ornithine. It carries out the reaction L-glutamate + acetyl-CoA = N-acetyl-L-glutamate + CoA + H(+). Its pathway is amino-acid biosynthesis; L-arginine biosynthesis; L-ornithine and N-acetyl-L-glutamate from L-glutamate and N(2)-acetyl-L-ornithine (cyclic): step 1/1. The protein operates within amino-acid biosynthesis; L-arginine biosynthesis; N(2)-acetyl-L-ornithine from L-glutamate: step 1/4. Catalyzes two activities which are involved in the cyclic version of arginine biosynthesis: the synthesis of N-acetylglutamate from glutamate and acetyl-CoA as the acetyl donor, and of ornithine by transacetylation between N(2)-acetylornithine and glutamate. In Colwellia psychrerythraea (strain 34H / ATCC BAA-681) (Vibrio psychroerythus), this protein is Arginine biosynthesis bifunctional protein ArgJ.